A 92-amino-acid polypeptide reads, in one-letter code: MSLPSLDSVPVLRRGFRFQFEPAQDCHVLLYPEGMVKLNDSAGEILKLVDGRRDVAAIVAALRERFPEVPGIDEDILTFLEVAHAQFWIELQ.

Belongs to the PqqD family. As to quaternary structure, monomer. Interacts with PqqE.

Its pathway is cofactor biosynthesis; pyrroloquinoline quinone biosynthesis. In terms of biological role, functions as a PqqA binding protein and presents PqqA to PqqE, in the pyrroloquinoline quinone (PQQ) biosynthetic pathway. The protein is PqqA binding protein of Pseudomonas paraeruginosa (strain DSM 24068 / PA7) (Pseudomonas aeruginosa (strain PA7)).